The primary structure comprises 153 residues: ORM1-like protein 3 (153 aa).

Residues 1–21 (MNVGTAHSEVNPNTRVMNSRG) lie on the Cytoplasmic side of the membrane. 2 helical membrane-spanning segments follow: residues 22–42 (IWLSYVLGIGLLHIILLSIPF) and 43–63 (VSVPVVWTLTNLIHNMCMYIF). Residues 64–94 (LHTVKGTPFETPDQGKARLLTHWEQMDYGVQ) lie on the Cytoplasmic side of the membrane. Residues 95–117 (FTASRKFLTITPIILYFLTSFYT) traverse the membrane as a helical segment. The Extracellular portion of the chain corresponds to 118-121 (KYDR). The helical transmembrane segment at 122-142 (VHFVINTISLLTVLIPKLPQF) threads the bilayer. Position 137 is a hydroxyproline (Pro-137). Residues 143-153 (HGVRLFGINKY) are Cytoplasmic-facing.

Belongs to the ORM family. In terms of assembly, ceramide-sensitive subunit of the serine palmitoyltransferase (SPT) complex, which is also composed of SPTLC1, SPTLC2/3 and SPTSSA/B. Post-translationally, when hydroxylated at Pro-137, ubiquitinated via 'Lys-48'-linkage, leading to proteasomal degradation. In endothelial cells, ORMDL3 proteasomal degradation is controlled by the sphingosine 1-phosphate receptor signaling pathway.

Its subcellular location is the endoplasmic reticulum membrane. Its function is as follows. Plays an essential role in the homeostatic regulation of sphingolipid de novo biosynthesis by modulating the activity of the serine palmitoyltransferase (SPT) in response to ceramide levels. When complexed to SPT, the binding of ceramides to its N-terminus stabilizes a conformation that block SPT substrate entry, hence preventing SPT catalytic activity. Through this mechanism, maintains ceramide levels at sufficient concentrations for the production of complex sphingolipids, but which prevents the accumulation of ceramides to levels that trigger apoptosis. This chain is ORM1-like protein 3 (ormdl3), found in Danio rerio (Zebrafish).